A 69-amino-acid polypeptide reads, in one-letter code: Large ribosomal subunit protein uL29 (69 aa).

Belongs to the universal ribosomal protein uL29 family.

In Rhodospirillum centenum (strain ATCC 51521 / SW), this protein is Large ribosomal subunit protein uL29.